The chain runs to 627 residues: Coiled-coil domain-containing protein 22 (627 aa).

The tract at residues 1–321 is sufficient for interaction with COMMD1; it reads MEEADRILIH…VSDVPATSRR (321 aa). The interval 1 to 447 is sufficicient and required for interaction with CCDC93; the sequence is MEEADRILIH…LQDCRELESS (447 aa). The tract at residues 218 to 243 is disordered; it reads TGRDRPGDEDWVHRTSRLPPQEDTRA. Residues 219-230 are compositionally biased toward basic and acidic residues; the sequence is GRDRPGDEDWVH. The stretch at 320 to 627 forms a coiled coil; the sequence is RRPEQVTWAA…AGLLGRVREA (308 aa). Ser-410 bears the Phosphoserine mark.

This sequence belongs to the CCDC22 family. Component of the commander complex consisting of the CCC subcomplex and the retriever subcomplex. Component of the CCC (COMMD/CCDC22/CCDC93) subcomplex consisting of COMMD1, COMMD2, COMMD3, COMMD4, COMMD5, COMMD6, COMMD7, COMMD8, COMMD9, COMMD10, CCDC22 and CCDC93. Forms a coiled-coil heterodimer with CCDC22; this heterodimer interacts with the guanine nucleotide exchange factor DENND10; the interaction is direct. Interacts with CUL1, CUL2, CUL3, SKP1, BTRC. Interacts with SNX17 and SNX31. Interacts with CPNE1 and CPNE4. In terms of tissue distribution, widely expressed in adult tissues and in fetal liver and brain, with highest levels in prostate and lowest in skeletal muscle.

It is found in the endosome. The protein localises to the cytoplasm. Its subcellular location is the cytoskeleton. The protein resides in the microtubule organizing center. It localises to the centrosome. Component of the commander complex that is essential for endosomal recycling of transmembrane cargos; the Commander complex is composed of composed of the CCC subcomplex and the retriever subcomplex. Component of the CCC complex, which is involved in the regulation of endosomal recycling of surface proteins, including integrins, signaling receptor and channels. Involved in regulation of NF-kappa-B signaling. Promotes ubiquitination of I-kappa-B-kinase subunit IKBKB and its subsequent proteasomal degradation leading to NF-kappa-B activation; the function may involve association with COMMD8 and a CUL1-dependent E3 ubiquitin ligase complex. May down-regulate NF-kappa-B activity via association with COMMD1 and involving a CUL2-dependent E3 ubiquitin ligase complex. Regulates the cellular localization of COMM domain-containing proteins, such as COMMD1 and COMMD10. Component of the CCC complex, which is involved in the regulation of endosomal recycling of surface proteins, including integrins, signaling receptor and channels. The CCC complex associates with SNX17, retriever and WASH complexes to prevent lysosomal degradation and promote cell surface recycling of numerous cargos such as integrins ITGA5:ITGB1. Plays a role in copper ion homeostasis. Involved in copper-dependent ATP7A trafficking between the trans-Golgi network and vesicles in the cell periphery; the function is proposed to depend on its association within the CCC complex and cooperation with the WASH complex on early endosomes. Its function is as follows. (Microbial infection) The CCC complex, in collaboration with the heterotrimeric retriever complex, mediates the exit of human papillomavirus to the cell surface. The protein is Coiled-coil domain-containing protein 22 (CCDC22) of Homo sapiens (Human).